A 467-amino-acid polypeptide reads, in one-letter code: MTSTPATIRTRFAPSPTGFLHLGGARTALFSWAFARHHQGVFVLRIEDTDLERSTPEAVQAILDSMDWLGMQPDEGPFYQMQRMDRYREVIAQMLQAGTAYHCYSSPEEVEAMREAARARGLKPRYDGTWRPEPGKTLPPVPAGRKPVVRFKNPQDGATGWNDMVKGPISFDNTELDDLIIARPDGTPTYNFCVVVDDWDMGITHVLRGDDHVNNTPRQINILRALGATLPEYGHVPMILGPDGEKLSKRHGAVNVMEYDAQGYLPEAMVNYLARLGWSHGDDELFTREQLVQWFDTRHLSKSASQWDPKKLNWVNAHYIKQMDNAELAARVAPRIERRGGNPAAVDLAAAMGLLKDRAETLEQLAESALLFCKPYQPAPAELAEQHLTPAAREALADFAQRAQGADWTREAIAALIKAVLADRGLKMPQLAIPLRVAVVGQTQTPAVDAVLALVGKDAVLQRLAAL.

The 'HIGH' region signature appears at 14-24 (PSPTGFLHLGG). Positions 124–134 (PRYDGTWRPEP) are enriched in basic and acidic residues. The interval 124–156 (PRYDGTWRPEPGKTLPPVPAGRKPVVRFKNPQD) is disordered. The short motif at 246-250 (KLSKR) is the 'KMSKS' region element. K249 is an ATP binding site.

This sequence belongs to the class-I aminoacyl-tRNA synthetase family. Glutamate--tRNA ligase type 1 subfamily. As to quaternary structure, monomer.

Its subcellular location is the cytoplasm. The enzyme catalyses tRNA(Glu) + L-glutamate + ATP = L-glutamyl-tRNA(Glu) + AMP + diphosphate. Catalyzes the attachment of glutamate to tRNA(Glu) in a two-step reaction: glutamate is first activated by ATP to form Glu-AMP and then transferred to the acceptor end of tRNA(Glu). This is Glutamate--tRNA ligase from Bordetella petrii (strain ATCC BAA-461 / DSM 12804 / CCUG 43448).